We begin with the raw amino-acid sequence, 402 residues long: Elongation factor Tu (402 aa).

One can recognise a tr-type G domain in the interval 16–211; sequence KEHINIGTIG…AVDSYIDSPV (196 aa). The tract at residues 25-32 is G1; that stretch reads GHVDHGKT. Residue 25-32 coordinates GTP; that stretch reads GHVDHGKT. Thr32 contributes to the Mg(2+) binding site. The tract at residues 66–70 is G2; that stretch reads GITIN. The G3 stretch occupies residues 87–90; it reads DCPG. GTP contacts are provided by residues 87 to 91 and 142 to 145; these read DCPGH and NKID. Positions 142–145 are G4; that stretch reads NKID. The interval 181 to 183 is G5; that stretch reads SAR.

This sequence belongs to the TRAFAC class translation factor GTPase superfamily. Classic translation factor GTPase family. EF-Tu/EF-1A subfamily. As to quaternary structure, monomer.

The protein localises to the cytoplasm. The catalysed reaction is GTP + H2O = GDP + phosphate + H(+). Functionally, GTP hydrolase that promotes the GTP-dependent binding of aminoacyl-tRNA to the A-site of ribosomes during protein biosynthesis. The polypeptide is Elongation factor Tu (Mesomycoplasma hyopneumoniae (strain J / ATCC 25934 / NCTC 10110) (Mycoplasma hyopneumoniae)).